Here is a 71-residue protein sequence, read N- to C-terminus: Virion membrane protein A13 homolog (71 aa).

The helical transmembrane segment at 1–21 (MGIIDTFVITAVTVIIFCLLI) threads the bilayer. At 22–70 (YAAYKRYKCIPSPDDRDKVLKSTLNDDTLFNQTLTPDQVKALHRLVTSS) the chain is on the virion surface side.

It belongs to the chordopoxvirinae A13 family.

Its subcellular location is the virion membrane. Functionally, essential for the encapsidation of DNA into immature virions (IV) and the subsequent maturation of IV into mature virions (MV). This is Virion membrane protein A13 homolog from Vertebrata (FPV).